We begin with the raw amino-acid sequence, 141 residues long: Large ribosomal subunit protein uL11 (141 aa).

Belongs to the universal ribosomal protein uL11 family. As to quaternary structure, part of the ribosomal stalk of the 50S ribosomal subunit. Interacts with L10 and the large rRNA to form the base of the stalk. L10 forms an elongated spine to which L12 dimers bind in a sequential fashion forming a multimeric L10(L12)X complex. In terms of processing, one or more lysine residues are methylated.

Functionally, forms part of the ribosomal stalk which helps the ribosome interact with GTP-bound translation factors. This is Large ribosomal subunit protein uL11 from Dinoroseobacter shibae (strain DSM 16493 / NCIMB 14021 / DFL 12).